The following is a 922-amino-acid chain: Lysine-specific demethylase 4 (922 aa).

Polar residues predominate over residues 1-15; sequence MASAATTTHFPSSRI. Disordered regions lie at residues 1 to 21 and 42 to 61; these read MASAATTTHFPSSRIPSEPCA and SSSCHVENDSRPLSPTMFTD. The region spanning 87–130 is the JmjN domain; that stretch reads VLTFYPTMREFKNFSQYIKKIEQNGGHLKAGIAKIVAPEGWTPR. Residue Tyr-213 participates in 2-oxoglutarate binding. The 166-residue stretch at 223-388 folds into the JmjC domain; that stretch reads DAQVEEWNMN…YGKDAVLCDC (166 aa). Fe cation contacts are provided by His-265 and Glu-267. 2-oxoglutarate-binding residues include Asn-275 and Lys-283. The Zn(2+) site is built by Cys-314 and His-320. 2-oxoglutarate is bound at residue Lys-321. His-356 contacts Fe cation. Zn(2+) contacts are provided by Cys-386 and Cys-388. The tract at residues 435-475 is disordered; sequence KRRQSLADASKIAKRARLGASSTATDSDGSSGSSGSEEATE. Low complexity predominate over residues 453 to 475; it reads GASSTATDSDGSSGSSGSEEATE. The C2HC pre-PHD-type zinc finger occupies 639–675; the sequence is TTSCQLCELRGGALIPCQIGTDSTWAHVACALFNRRA. Residues 723–783 form a PHD-type; degenerate zinc finger; it reads WECVVCHRTD…GVVMICHKHE (61 aa).

It belongs to the JHDM3 histone demethylase family. Fe(2+) serves as cofactor.

The protein resides in the nucleus. It carries out the reaction N(6),N(6),N(6)-trimethyl-L-lysyl(9)-[histone H3] + 2 2-oxoglutarate + 2 O2 = N(6)-methyl-L-lysyl(9)-[histone H3] + 2 formaldehyde + 2 succinate + 2 CO2. The catalysed reaction is N(6),N(6),N(6)-trimethyl-L-lysyl(36)-[histone H3] + 2 2-oxoglutarate + 2 O2 = N(6)-methyl-L-lysyl(36)-[histone H3] + 2 formaldehyde + 2 succinate + 2 CO2. Its function is as follows. Histone demethylase that specifically demethylates 'Lys-9' and 'Lys-36' residues of histone H3, thereby playing a central role in histone code. Demethylation of Lys residue generates formaldehyde and succinate. Involved in the negative regulation of lifespan in a germline-dependent fashion. The chain is Lysine-specific demethylase 4 (jmjd-2) from Caenorhabditis elegans.